Consider the following 379-residue polypeptide: Cathepsin B-like cysteine proteinase 6 (379 aa).

The signal sequence occupies residues 1–16 (MKTLLFLSCIVVAAYC). Residues 17–104 (ACNDNLESVL…LSKTKDLDLD (88 aa)) constitute a propeptide that is removed on maturation. Cystine bridges form between Cys-118/Cys-147, Cys-130/Cys-174, Cys-166/Cys-233, Cys-167/Cys-170, Cys-203/Cys-237, and Cys-211/Cys-223. Cys-133 is a catalytic residue. Residue Asn-196 is glycosylated (N-linked (GlcNAc...) asparagine). An N-linked (GlcNAc...) asparagine; atypical glycan is attached at Asn-201. Residues His-305 and Asn-325 contribute to the active site.

The protein belongs to the peptidase C1 family.

The polypeptide is Cathepsin B-like cysteine proteinase 6 (cpr-6) (Caenorhabditis elegans).